The primary structure comprises 338 residues: Ketol-acid reductoisomerase (NADP(+)) (338 aa).

One can recognise a KARI N-terminal Rossmann domain in the interval 1-181; it reads MNVYYDKDCD…GGGRSGIIET (181 aa). Residues 24–27, Arg47, Ser50, Ser52, and 82–85 contribute to the NADP(+) site; these read YGSQ and DEFQ. Residue His107 is part of the active site. Gly133 contacts NADP(+). One can recognise a KARI C-terminal knotted domain in the interval 182–327; sequence TFKDETETDL…AKLRGMMPWI (146 aa). 4 residues coordinate Mg(2+): Asp190, Glu194, Glu226, and Glu230. Ser251 is a binding site for substrate.

Belongs to the ketol-acid reductoisomerase family. It depends on Mg(2+) as a cofactor.

It carries out the reaction (2R)-2,3-dihydroxy-3-methylbutanoate + NADP(+) = (2S)-2-acetolactate + NADPH + H(+). The enzyme catalyses (2R,3R)-2,3-dihydroxy-3-methylpentanoate + NADP(+) = (S)-2-ethyl-2-hydroxy-3-oxobutanoate + NADPH + H(+). Its pathway is amino-acid biosynthesis; L-isoleucine biosynthesis; L-isoleucine from 2-oxobutanoate: step 2/4. The protein operates within amino-acid biosynthesis; L-valine biosynthesis; L-valine from pyruvate: step 2/4. Involved in the biosynthesis of branched-chain amino acids (BCAA). Catalyzes an alkyl-migration followed by a ketol-acid reduction of (S)-2-acetolactate (S2AL) to yield (R)-2,3-dihydroxy-isovalerate. In the isomerase reaction, S2AL is rearranged via a Mg-dependent methyl migration to produce 3-hydroxy-3-methyl-2-ketobutyrate (HMKB). In the reductase reaction, this 2-ketoacid undergoes a metal-dependent reduction by NADPH to yield (R)-2,3-dihydroxy-isovalerate. In Psychrobacter arcticus (strain DSM 17307 / VKM B-2377 / 273-4), this protein is Ketol-acid reductoisomerase (NADP(+)).